The primary structure comprises 208 residues: Cytochrome c oxidase assembly protein CtaG (208 aa).

The Cytoplasmic portion of the chain corresponds to 1–19 (MPDTQPNVSPNPIRRRGLG). Residues 20 to 42 (RDATVASICGLVVALMVGASFAA) form a helical; Signal-anchor for type II membrane protein membrane-spanning segment. The Periplasmic portion of the chain corresponds to 43–208 (VPFYNWFCRT…TAPDKRKGNL (166 aa)).

Belongs to the COX11/CtaG family.

It localises to the cell inner membrane. In terms of biological role, exerts its effect at some terminal stage of cytochrome c oxidase synthesis, probably by being involved in the insertion of the copper B into subunit I. The chain is Cytochrome c oxidase assembly protein CtaG from Rhodopseudomonas palustris (strain HaA2).